The primary structure comprises 423 residues: T-box transcription factor T-A (423 aa).

The T-box DNA-binding region spans 44-212; it reads LWTKFKELTN…HNPFAKAFLD (169 aa). Residues 215–227 show a composition bias toward basic and acidic residues; the sequence is ERSDHKEVPDHST. Disordered regions lie at residues 215–234 and 280–304; these read ERSD…QSGY and AAPY…SSGS. Positions 290-304 are enriched in polar residues; that stretch reads RSTTTNNYMDNSSGS.

Monomer. Binds DNA as a monomer. As to expression, first expressed at the dorsal side of the blastula embryo. Expressed in the germ ring, shield and chordamesoderm during gastrulation and is restricted to the notochord and tailbud during somitogenesis (at protein level).

Its subcellular location is the nucleus. In terms of biological role, involved in the transcriptional regulation of genes required for mesoderm differentiation, including itself. Indispensable for the formation of the notochord and the tail structure. Functions together with tbx16/spadetail in development of trunk and tail mesoderm. Functions by itself early in development to repress medial floor plate and promote notochord fate but at later times, functions together with tbx16/spadetail to promote medial floor plate formation. Acts in a parallel pathway to, but cooperates with, non-canonical wnt-signaling during tail formation. Required for the morphogenesis of Kupffer's vesicle and regulates left-right asymmetry. The chain is T-box transcription factor T-A (tbxta) from Danio rerio (Zebrafish).